The following is a 251-amino-acid chain: MIRVNSLQVDSRLLPLSLQANAGEVWHVIGPNGCGKSTLLAALAGMIPFSGSVQVGGLNVSQASLSELARHRAYLAQNDKPSFQLHVFQYLALSVPANVALERSEVASEIDQISRLLNIDDKLHRSIHQLSGGEWQRVRLAGSCLQVSPVLNPSARLLIWDEPAAPLDIAQESLLYRLIERMAGQGLTVIMANHDLNRTLRHADQVLLLSRGVLYRAGSAKEVLTQEVLQSVFGTSIRRVELEGHPHLLFD.

An ABC transporter domain is found at 2–236; the sequence is IRVNSLQVDS…EVLQSVFGTS (235 aa). Residue 30 to 37 coordinates ATP; that stretch reads GPNGCGKS.

Belongs to the ABC transporter superfamily. Vitamin B12 importer (TC 3.A.1.13.1) family. As to quaternary structure, the complex is composed of two ATP-binding proteins (BtuD), two transmembrane proteins (BtuC) and a solute-binding protein (BtuF).

It is found in the cell inner membrane. It catalyses the reaction an R-cob(III)alamin(out) + ATP + H2O = an R-cob(III)alamin(in) + ADP + phosphate + H(+). In terms of biological role, part of the ABC transporter complex BtuCDF involved in vitamin B12 import. Responsible for energy coupling to the transport system. In Vibrio cholerae serotype O1 (strain ATCC 39541 / Classical Ogawa 395 / O395), this protein is Vitamin B12 import ATP-binding protein BtuD.